The chain runs to 408 residues: Digeranylgeranylglycerophospholipid reductase 1 (408 aa).

Residues alanine 15, glutamate 34, cysteine 45, alanine 46, glycine 48, arginine 99, valine 123, aspartate 279, glycine 291, and isoleucine 292 each coordinate FAD.

It belongs to the geranylgeranyl reductase family. DGGGPL reductase subfamily. FAD serves as cofactor.

The catalysed reaction is a 2,3-bis-O-phytanyl-sn-glycerol 1-phospholipid + 8 oxidized 2[4Fe-4S]-[ferredoxin] = a 2,3-bis-O-(geranylgeranyl)-sn-glycerol 1-phospholipid + 8 reduced 2[4Fe-4S]-[ferredoxin] + 16 H(+). It carries out the reaction 2,3-bis-O-(phytanyl)-sn-glycerol 1-phosphate + 8 oxidized 2[4Fe-4S]-[ferredoxin] = 2,3-bis-O-(geranylgeranyl)-sn-glycerol 1-phosphate + 8 reduced 2[4Fe-4S]-[ferredoxin] + 16 H(+). The enzyme catalyses a 2,3-bis-O-phytanyl-sn-glycerol 1-phospholipid + 8 A = a 2,3-bis-O-(geranylgeranyl)-sn-glycerol 1-phospholipid + 8 AH2. It catalyses the reaction CDP-2,3-bis-O-(geranylgeranyl)-sn-glycerol + 8 AH2 = CDP-2,3-bis-O-(phytanyl)-sn-glycerol + 8 A. The catalysed reaction is archaetidylserine + 8 AH2 = 2,3-bis-O-phytanyl-sn-glycero-3-phospho-L-serine + 8 A. It functions in the pathway membrane lipid metabolism; glycerophospholipid metabolism. Its function is as follows. Is involved in the reduction of 2,3-digeranylgeranylglycerophospholipids (unsaturated archaeols) into 2,3-diphytanylglycerophospholipids (saturated archaeols) in the biosynthesis of archaeal membrane lipids. Catalyzes the formation of archaetidic acid (2,3-di-O-phytanyl-sn-glyceryl phosphate) from 2,3-di-O-geranylgeranylglyceryl phosphate (DGGGP) via the hydrogenation of each double bond of the isoprenoid chains. Is also probably able to reduce double bonds of geranyl groups in CDP-2,3-bis-O-(geranylgeranyl)-sn-glycerol and archaetidylserine, thus acting at various stages in the biosynthesis of archaeal membrane lipids. This chain is Digeranylgeranylglycerophospholipid reductase 1, found in Methanococcoides burtonii (strain DSM 6242 / NBRC 107633 / OCM 468 / ACE-M).